The chain runs to 633 residues: DNA mismatch repair protein MutL (633 aa).

Belongs to the DNA mismatch repair MutL/HexB family.

This protein is involved in the repair of mismatches in DNA. It is required for dam-dependent methyl-directed DNA mismatch repair. May act as a 'molecular matchmaker', a protein that promotes the formation of a stable complex between two or more DNA-binding proteins in an ATP-dependent manner without itself being part of a final effector complex. The sequence is that of DNA mismatch repair protein MutL from Macrococcus caseolyticus (strain JCSC5402) (Macrococcoides caseolyticum).